Here is a 488-residue protein sequence, read N- to C-terminus: E3 ubiquitin-protein ligase TRIM39 (488 aa).

An RING-type zinc finger spans residues 29–70 (CSVCLEYLKEPVIIECGHNFCKACITRWWEDLERDFPCPVCR). The segment at 102–143 (RDESLCSQHHEPLSLFCYEDQEAVCLICAISHTHRPHTVVPM) adopts a B box-type zinc-finger fold. Zn(2+)-binding residues include Cys107, His110, Cys129, and His135. Residues 181–250 (ELKRLVESRR…AHLAAEVEGK (70 aa)) adopt a coiled-coil conformation. Interaction with CDKN1A stretches follow at residues 268 to 307 (KCEK…QLIA) and 359 to 488 (TSGR…TDWE). The region spanning 289–484 (SNFPRQYFAL…NAAPLTIRPP (196 aa)) is the B30.2/SPRY domain.

Belongs to the TRIM/RBCC family. Interacts with MOAP1. Interacts with CDKN1A. Autoubiquitinated.

The protein resides in the cytoplasm. It is found in the cytosol. The protein localises to the mitochondrion. Its subcellular location is the nucleus. It carries out the reaction S-ubiquitinyl-[E2 ubiquitin-conjugating enzyme]-L-cysteine + [acceptor protein]-L-lysine = [E2 ubiquitin-conjugating enzyme]-L-cysteine + N(6)-ubiquitinyl-[acceptor protein]-L-lysine.. It participates in protein modification; protein ubiquitination. In terms of biological role, E3 ubiquitin-protein ligase. May facilitate apoptosis by inhibiting APC/C-Cdh1-mediated poly-ubiquitination and subsequent proteasome-mediated degradation of the pro-apoptotic protein MOAP1. Regulates the G1/S transition of the cell cycle and DNA damage-induced G2 arrest by stabilizing CDKN1A/p21. Positively regulates CDKN1A/p21 stability by competing with DTL for CDKN1A/p21 binding, therefore disrupting DCX(DTL) E3 ubiquitin ligase complex-mediated CDKN1A/p21 ubiquitination and degradation. The polypeptide is E3 ubiquitin-protein ligase TRIM39 (Trim39) (Mus musculus (Mouse)).